A 558-amino-acid polypeptide reads, in one-letter code: Laccase-4 (558 aa).

The signal sequence occupies residues 1–24; sequence MGSHMVWFLFLVSFFSVFPAPSES. Plastocyanin-like domains follow at residues 32–148 and 158–308; these read NVVM…PKRG and NEKV…YSGT. Residues asparagine 37 and asparagine 78 are each glycosylated (N-linked (GlcNAc...) asparagine). Residues histidine 82 and histidine 84 each contribute to the Cu cation site. N-linked (GlcNAc...) asparagine glycosylation is present at asparagine 114. Residues histidine 127 and histidine 129 each coordinate Cu cation. N-linked (GlcNAc...) asparagine glycosylation is found at asparagine 187, asparagine 296, asparagine 323, asparagine 330, asparagine 373, asparagine 383, asparagine 400, asparagine 418, and asparagine 441. The Plastocyanin-like 3 domain maps to 408–542; it reads DFPKNPPHVF…KMAFLVENGK (135 aa). Residues histidine 459, histidine 462, and histidine 464 each contribute to the Cu cation site. The N-linked (GlcNAc...) asparagine glycan is linked to asparagine 479. Cu cation is bound by residues histidine 521, cysteine 522, histidine 523, and histidine 527. A glycan (N-linked (GlcNAc...) asparagine) is linked at asparagine 545.

It belongs to the multicopper oxidase family. It depends on Cu cation as a cofactor. As to expression, ubiquitous, with higher levels in the inflorescence stem.

The protein resides in the secreted. It localises to the extracellular space. The protein localises to the apoplast. The enzyme catalyses 4 hydroquinone + O2 = 4 benzosemiquinone + 2 H2O. Functionally, lignin degradation and detoxification of lignin-derived products. Required for secondary xylem cell wall lignification. In Arabidopsis thaliana (Mouse-ear cress), this protein is Laccase-4 (IRX12).